Consider the following 232-residue polypeptide: MDRQQQLRRLQGGLIVSCQAPADSPLHQPEIIAAIAVAAVQRGAVGIRLDTPEHVRAVRDRLPETPIIGLWKRTFPDSSVYITPRYVEAEAIAAAGADIVALDCTLRPRPDGEDFCQIIPRLQQELGCAVMADIDTLEAAIAAAKAGADLVGTTLYGYTEATQGQTPPGWDLLETAAQQLPNTPVICEGGIASAQAARQACDRGAFAVVVGTAITGIDLQVQAYVTALNARP.

It belongs to the NanE family.

The enzyme catalyses an N-acyl-D-glucosamine 6-phosphate = an N-acyl-D-mannosamine 6-phosphate. The protein operates within amino-sugar metabolism; N-acetylneuraminate degradation; D-fructose 6-phosphate from N-acetylneuraminate: step 3/5. Converts N-acetylmannosamine-6-phosphate (ManNAc-6-P) to N-acetylglucosamine-6-phosphate (GlcNAc-6-P). This is Putative N-acetylmannosamine-6-phosphate 2-epimerase from Synechococcus elongatus (strain ATCC 33912 / PCC 7942 / FACHB-805) (Anacystis nidulans R2).